We begin with the raw amino-acid sequence, 228 residues long: Cytidylate kinase (228 aa).

Residue 12-20 (GPSGSGKGT) coordinates ATP.

The protein belongs to the cytidylate kinase family. Type 1 subfamily.

It is found in the cytoplasm. The catalysed reaction is CMP + ATP = CDP + ADP. It carries out the reaction dCMP + ATP = dCDP + ADP. The protein is Cytidylate kinase of Pseudomonas entomophila (strain L48).